The sequence spans 252 residues: Ditrans,polycis-undecaprenyl-diphosphate synthase ((2E,6E)-farnesyl-diphosphate specific) (252 aa).

Residue aspartate 25 is part of the active site. Residue aspartate 25 participates in Mg(2+) binding. Substrate is bound by residues 26-29 (GNGR), tryptophan 30, arginine 38, histidine 42, and 70-72 (SSE). Catalysis depends on asparagine 73, which acts as the Proton acceptor. Tryptophan 74, arginine 76, and arginine 193 together coordinate substrate. Mg(2+) is bound at residue histidine 198. Position 199-201 (199-201 (RIS)) interacts with substrate. A Mg(2+)-binding site is contributed by glutamate 212.

Belongs to the UPP synthase family. As to quaternary structure, homodimer. Requires Mg(2+) as cofactor.

The enzyme catalyses 8 isopentenyl diphosphate + (2E,6E)-farnesyl diphosphate = di-trans,octa-cis-undecaprenyl diphosphate + 8 diphosphate. Functionally, catalyzes the sequential condensation of isopentenyl diphosphate (IPP) with (2E,6E)-farnesyl diphosphate (E,E-FPP) to yield (2Z,6Z,10Z,14Z,18Z,22Z,26Z,30Z,34E,38E)-undecaprenyl diphosphate (di-trans,octa-cis-UPP). UPP is the precursor of glycosyl carrier lipid in the biosynthesis of bacterial cell wall polysaccharide components such as peptidoglycan and lipopolysaccharide. The sequence is that of Ditrans,polycis-undecaprenyl-diphosphate synthase ((2E,6E)-farnesyl-diphosphate specific) from Salmonella paratyphi A (strain ATCC 9150 / SARB42).